Here is a 505-residue protein sequence, read N- to C-terminus: Alpha-1-syntrophin (505 aa).

2 disordered regions span residues 1 to 25 (MASG…GAGG) and 40 to 77 (LTVS…PPQL). 2 consecutive PH domains span residues 6–269 (RAPR…AQVN) and 293–401 (DIKQ…DGCH). The 84-residue stretch at 87 to 170 (RVTVRKADAG…EVVLEVKYMK (84 aa)) folds into the PDZ domain. 5 positions are modified to phosphoserine: S101, S184, S189, S193, and S200. A disordered region spans residues 180–210 (TGGTSVGWDSPPASPLQRQPSSPGPTPRNFS). Positions 449–505 (PFEKLQMSSDDGASLLFLDFGGAEGEIQLDLHSCPKTIVFIIHSFLSAKVTRLGLLA) constitute an SU domain. The interval 483-505 (PKTIVFIIHSFLSAKVTRLGLLA) is calmodulin-binding.

This sequence belongs to the syntrophin family. Monomer and homodimer. Interacts with the other members of the syntrophin family SNTB1 and SNTB2; SGCG and SGCA of the dystrophin glycoprotein complex; NOS1; GRB2; the sodium channel proteins SCN4A and SCN5A; F-actin and calmodulin. Interacts with dystrophin protein DMD and related proteins DTNA and UTRN and with MAPK12, TGFA and GA. Interacts with MYOC; regulates muscle hypertrophy. Interacts with DTNB. In terms of processing, phosphorylated by CaM-kinase II. Phosphorylation may inhibit the interaction with DMD. In terms of tissue distribution, high expression in skeletal muscle and heart. Low expression in brain, pancreas, liver, kidney and lung. Not detected in placenta.

It localises to the cell membrane. The protein localises to the sarcolemma. Its subcellular location is the cell junction. The protein resides in the cytoplasm. It is found in the cytoskeleton. Functionally, adapter protein that binds to and probably organizes the subcellular localization of a variety of membrane proteins. May link various receptors to the actin cytoskeleton and the extracellular matrix via the dystrophin glycoprotein complex. Plays an important role in synapse formation and in the organization of UTRN and acetylcholine receptors at the neuromuscular synapse. Binds to phosphatidylinositol 4,5-bisphosphate. The chain is Alpha-1-syntrophin (SNTA1) from Homo sapiens (Human).